Here is a 501-residue protein sequence, read N- to C-terminus: uncharacterized protein (501 aa).

Catalysis depends on glutamate 236, which acts as the Proton donor. Glutamate 333 functions as the Nucleophile in the catalytic mechanism.

This sequence belongs to the glycosyl hydrolase 5 (cellulase A) family.

It is found in the mitochondrion intermembrane space. This is an uncharacterized protein from Saccharomyces cerevisiae (strain ATCC 204508 / S288c) (Baker's yeast).